Consider the following 237-residue polypeptide: Purine nucleoside phosphorylase DeoD-type (237 aa).

Position 4 (histidine 4) interacts with a purine D-ribonucleoside. Phosphate contacts are provided by residues glycine 20, arginine 24, arginine 43, and 87–90; that span reads RVGT. Residues 179 to 181 and 203 to 204 each bind a purine D-ribonucleoside; these read EME and SD. Aspartate 204 functions as the Proton donor in the catalytic mechanism.

This sequence belongs to the PNP/UDP phosphorylase family. In terms of assembly, homohexamer; trimer of homodimers.

It carries out the reaction a purine D-ribonucleoside + phosphate = a purine nucleobase + alpha-D-ribose 1-phosphate. The enzyme catalyses a purine 2'-deoxy-D-ribonucleoside + phosphate = a purine nucleobase + 2-deoxy-alpha-D-ribose 1-phosphate. Its function is as follows. Catalyzes the reversible phosphorolytic breakdown of the N-glycosidic bond in the beta-(deoxy)ribonucleoside molecules, with the formation of the corresponding free purine bases and pentose-1-phosphate. The protein is Purine nucleoside phosphorylase DeoD-type of Streptococcus uberis (strain ATCC BAA-854 / 0140J).